The following is a 210-amino-acid chain: Outer-membrane lipoprotein LolB (210 aa).

The first 18 residues, 1–18, serve as a signal peptide directing secretion; it reads MKKFTKILSLSTLLFLAG. A lipid anchor (N-palmitoyl cysteine) is attached at Cys-19. Cys-19 carries S-diacylglycerol cysteine lipidation.

The protein belongs to the LolB family. In terms of assembly, monomer.

The protein resides in the cell outer membrane. Plays a critical role in the incorporation of lipoproteins in the outer membrane after they are released by the LolA protein. This Actinobacillus pleuropneumoniae serotype 7 (strain AP76) protein is Outer-membrane lipoprotein LolB.